Here is a 203-residue protein sequence, read N- to C-terminus: MAEGPLEAPFWRKGLLVAGLDEAGRGAWAGPIVVGVVVLPPGEYPFRDSKLLSPRARERLAEKVKEVALAFALGVAEAAEVDRLGVLKATLLAAERALLSLPLAPEALVTDYLPLPTPLPLLSPPKADEKSPTVAAASILAKVHRDRIMAELDRLYPGYGFARHKGYGTPEHQEALLALGPSPVHRKRFAPVAQAPLRFPEAP.

In terms of domain architecture, RNase H type-2 spans Leu-15–Glu-201. Positions 21, 22, and 111 each coordinate a divalent metal cation.

It belongs to the RNase HII family. The cofactor is Mn(2+). Mg(2+) is required as a cofactor.

The protein resides in the cytoplasm. It catalyses the reaction Endonucleolytic cleavage to 5'-phosphomonoester.. Functionally, endonuclease that specifically degrades the RNA of RNA-DNA hybrids. The polypeptide is Ribonuclease HII (Thermus thermophilus (strain ATCC BAA-163 / DSM 7039 / HB27)).